Here is a 250-residue protein sequence, read N- to C-terminus: Myelin basic protein (250 aa).

Residues 1-28 (MGNHSGKRELSAEKASKDGEIHRGEAGK) show a composition bias toward basic and acidic residues. Residues 1–150 (MGNHSGKREL…SQRSKYLATA (150 aa)) are disordered. G2 is modified (N-acetylalanine). Residues S31 and S40 each carry the phosphoserine modification. The segment covering 95–113 (FSRDAPGREDNTFKDRPSE) has biased composition (basic and acidic residues). At S96 the chain carries Phosphothreonine. A Phosphoserine modification is found at E113. E122 carries the post-translational modification Phosphothreonine. Position 125 is a phosphotyrosine (T125). Phosphoserine occurs at positions 135, 139, 141, and 144. 2 positions are modified to phosphotyrosine: Y146 and L147. T149 bears the Phosphothreonine mark. S151 is modified (phosphoserine). S151 is modified (phosphotyrosine). Residue T152 is modified to Phosphothreonine. Residues R157 and R163 each carry the citrulline modification. T167 is subject to Phosphothreonine. At S172 the chain carries Phosphoserine. Residues R175 and R181 each carry the omega-N-methylarginine modification. The tract at residues 175–250 (RFFSGDRGAP…SRSGSPMARR (76 aa)) is disordered. A Phosphoserine modification is found at S188. Position 197 is a phosphothreonine (T197). The segment covering 197–206 (THYGSLPQKS) has biased composition (polar residues). Phosphotyrosine is present on Y199. Phosphoserine is present on S206. Residues T211, T226, and T229 each carry the phosphothreonine modification. Q234 carries the deamidated glutamine modification. Position 239 is a citrulline (R239). S241 carries the phosphoserine modification. S245 is modified (phosphoserine; by UHMK1). R250 carries the post-translational modification Citrulline.

It belongs to the myelin basic protein family. In terms of assembly, homodimer. As in other animals, several charge isomers may be produced as a result of optional post-translational modifications, such as phosphorylation of serine or threonine residues, deamidation of glutamine or asparagine residues, citrullination and methylation of arginine residues. In terms of processing, methylated on arginine residues; decreases with the age of the animal, making MBP more cationic. Post-translationally, phosphorylated by TAOK2, VRK2, MAPK11, MAPK12, MAPK14 and MINK1. Proteolytically cleaved in B cell lysosomes by cathepsin CTSG which degrades the major immunogenic MBP epitope and prevents the activation of MBP-specific autoreactive T cells. As to expression, in the embryo, isoform 1-isoform 3 are found in neurons within the central nervous system (primarily in pioneer neurons important in the formation of the cortex) and the peripheral nervous system. They are also expressed in the thymus, gut, lung and kidney. In the adult, isoform 1-isoform 3 are highly expressed in the brain (mainly in brain regions rich in oligodendrocytes) and spleen. Lower levels are seen in the heart, kidney and lung. Isoform 2 is also found in cells of the immune system. The isoforms missing the 134 first amino acids (isoform 4-isoform 13) are almost exclusively produced in the myelin-forming cells, the mature oligodendrocytes.

It localises to the myelin membrane. The protein resides in the cytoplasm. Its subcellular location is the nucleus. The classic group of MBP isoforms (isoform 4-isoform 13) are with PLP the most abundant protein components of the myelin membrane in the CNS. They have a role in both its formation and stabilization. The non-classic group of MBP isoforms (isoform 1-isoform 3/Golli-MBPs) may preferentially have a role in the early developing brain long before myelination, maybe as components of transcriptional complexes, and may also be involved in signaling pathways in T-cells and neural cells. Differential splicing events combined to optional post-translational modifications give a wide spectrum of isomers, with each of them potentially having a specialized function. This Mus musculus (Mouse) protein is Myelin basic protein (Mbp).